We begin with the raw amino-acid sequence, 97 residues long: Co-chaperonin GroES (97 aa).

It belongs to the GroES chaperonin family. As to quaternary structure, heptamer of 7 subunits arranged in a ring. Interacts with the chaperonin GroEL.

It localises to the cytoplasm. Together with the chaperonin GroEL, plays an essential role in assisting protein folding. The GroEL-GroES system forms a nano-cage that allows encapsulation of the non-native substrate proteins and provides a physical environment optimized to promote and accelerate protein folding. GroES binds to the apical surface of the GroEL ring, thereby capping the opening of the GroEL channel. The protein is Co-chaperonin GroES of Yersinia enterocolitica serotype O:8 / biotype 1B (strain NCTC 13174 / 8081).